The primary structure comprises 279 residues: Proteasome subunit beta (279 aa).

Positions 1 to 51 (MTFDASGRLPEAFLTPGGSSFMDFLAGHAPDLLPGRRSLGTGDLSKDVPHG) are cleaved as a propeptide — removed in mature form; by autocatalysis. Thr-52 functions as the Nucleophile in the catalytic mechanism.

It belongs to the peptidase T1B family. As to quaternary structure, the 20S proteasome core is composed of 14 alpha and 14 beta subunits that assemble into four stacked heptameric rings, resulting in a barrel-shaped structure. The two inner rings, each composed of seven catalytic beta subunits, are sandwiched by two outer rings, each composed of seven alpha subunits. The catalytic chamber with the active sites is on the inside of the barrel. Has a gated structure, the ends of the cylinder being occluded by the N-termini of the alpha-subunits. Is capped by the proteasome-associated ATPase, ARC.

Its subcellular location is the cytoplasm. The catalysed reaction is Cleavage of peptide bonds with very broad specificity.. Its pathway is protein degradation; proteasomal Pup-dependent pathway. Its activity is regulated as follows. The formation of the proteasomal ATPase ARC-20S proteasome complex, likely via the docking of the C-termini of ARC into the intersubunit pockets in the alpha-rings, may trigger opening of the gate for substrate entry. Interconversion between the open-gate and close-gate conformations leads to a dynamic regulation of the 20S proteasome proteolysis activity. Its function is as follows. Component of the proteasome core, a large protease complex with broad specificity involved in protein degradation. The polypeptide is Proteasome subunit beta (Kribbella flavida (strain DSM 17836 / JCM 10339 / NBRC 14399)).